The following is a 322-amino-acid chain: Picrinine-N-methytransferase (322 aa).

An SAM motif I region spans residues 103 to 112 (MLDVGCGLGG). The SAM motif II stretch occupies residues 166–174 (GTFDLVFTI). Residues 193–202 (VAAPGAPVVI) form an SAM motif III region.

Belongs to the class I-like SAM-binding methyltransferase superfamily. gTMT family. In terms of assembly, homodimer. In terms of tissue distribution, accumulates in tissues actively synthesizing monoterpenoid indole alkaloids (MIAs) (at protein level). Mainly expressed in young leaves, but barely in roots and stems.

The protein localises to the cytoplasm. It is found in the cytosol. The enzyme catalyses picrinine + S-adenosyl-L-methionine = ervincine + S-adenosyl-L-homocysteine + H(+). It functions in the pathway alkaloid biosynthesis; vindoline biosynthesis. In terms of biological role, S-adenosyl-L-methionine-dependent N-methyltransferase involved in the biosynthesis of biologically active monoterpenoid indole alkaloids (MIAs) natural products including vindoline. Catalyzes the conversion of picrinine to N-methylpicrinine (ervincine). Also accepts, with low efficiency, 21-hydroxycyclolochnericine and norajmaline as substrates. This is Picrinine-N-methytransferase from Vinca minor (Common periwinkle).